Here is a 244-residue protein sequence, read N- to C-terminus: 5-oxoprolinase subunit A (244 aa).

This sequence belongs to the LamB/PxpA family. In terms of assembly, forms a complex composed of PxpA, PxpB and PxpC.

It catalyses the reaction 5-oxo-L-proline + ATP + 2 H2O = L-glutamate + ADP + phosphate + H(+). Catalyzes the cleavage of 5-oxoproline to form L-glutamate coupled to the hydrolysis of ATP to ADP and inorganic phosphate. The polypeptide is 5-oxoprolinase subunit A (Salmonella heidelberg (strain SL476)).